We begin with the raw amino-acid sequence, 695 residues long: MEKRNQKKRQQNAHLSCELCRERKVKCDKLDPCTNCASAGVVCVPVRRPRLPRGAHARRLRRISPEDPEASIRIDISPGAGTAADEDLKKRIRRLEALVDSMRSSASQSSNQDQESRDAIESISNETEDASAPTPDSSRMPLGDGGLRVLGLSGPSNLEIGWASIIEDKETTTQLCQVYLLNVDPVIKILHRPSVERWMLQGERYLGFPERHAAVESLGSAICYVAATSLTETQSWARFHATKSSIVARARRACEAALEKSSPLVSPEVTTLQAFVLYLVARRSEDPSRAVWTLMAFAVRIAKALDLPGGADETFFGQQMRKRLWLTICLLDFQTSLSQPSEPLISVVEATASFSPPRHINDSDFSLTTSHDIPDREGLTDTTFSMVSYHVQVAGRLLNFEPSVGDYETRQQHVQQFEQRTLRLLFYCDPESTPYAWFTWHRIQCFVSGARLSAVRPLRHPRGGSTSCMIPLTGTNESAGPLSLALNVLEKVQLVHTDPRGEGFRWFVTVPWRALAIAISECYVCQDRALMQRAWPIVEAAFQQHEAAVSGSSKAISTTLERMMCRIREKLSLTLGTSAITASPTFGITSIATTLSVPHTPPSQSSITSSGDLLSNWPWPATELSHPGPDLALVAGVAPISSSLPKLDPLLHSLDNQLVIAAQEPLVDADQSWAWEEVMASLHHDETIGADMFLS.

The zn(2)-C6 fungal-type DNA-binding region spans 17–43 (CELCRERKVKCDKLDPCTNCASAGVVC). Positions 101–113 (SMRSSASQSSNQD) are enriched in low complexity. The disordered stretch occupies residues 101 to 146 (SMRSSASQSSNQDQESRDAIESISNETEDASAPTPDSSRMPLGDGG).

Its subcellular location is the nucleus. Functionally, transcription factor that specifically regulates the neosartoricin B biosynthesis gene cluster. This is C6 finger domain transcription factor nscR from Arthroderma otae (strain ATCC MYA-4605 / CBS 113480) (Microsporum canis).